The following is a 457-amino-acid chain: UDP-N-acetylmuramate--L-alanine ligase (457 aa).

109-115 (GTDGKTT) contributes to the ATP binding site.

The protein belongs to the MurCDEF family.

The protein resides in the cytoplasm. It carries out the reaction UDP-N-acetyl-alpha-D-muramate + L-alanine + ATP = UDP-N-acetyl-alpha-D-muramoyl-L-alanine + ADP + phosphate + H(+). It functions in the pathway cell wall biogenesis; peptidoglycan biosynthesis. Cell wall formation. The polypeptide is UDP-N-acetylmuramate--L-alanine ligase (Thermotoga sp. (strain RQ2)).